Consider the following 399-residue polypeptide: Rho GTPase-activating protein gacC (399 aa).

Residues methionine 1 to serine 13 are compositionally biased toward basic and acidic residues. Positions methionine 1–lysine 80 are disordered. Polar residues predominate over residues aspartate 14–serine 31. The segment covering serine 61–valine 79 has biased composition (low complexity). The region spanning valine 186–phenylalanine 375 is the Rho-GAP domain.

It localises to the cytoplasm. Functionally, rho GTPase-activating protein involved in the signal transduction pathway. The protein is Rho GTPase-activating protein gacC (gacC) of Dictyostelium discoideum (Social amoeba).